We begin with the raw amino-acid sequence, 182 residues long: Lipid A acyltransferase PagP (182 aa).

The first 21 residues, M1 to A21, serve as a signal peptide directing secretion. Residue C22 is the site of N-palmitoyl cysteine attachment. Residue C22 is the site of S-diacylglycerol cysteine attachment. Catalysis depends on residues H55, D98, and S99.

It belongs to the lipid A palmitoyltransferase family. Homodimer.

Its subcellular location is the cell outer membrane. The catalysed reaction is a lipid A + a 1,2-diacyl-sn-glycero-3-phosphocholine = a hepta-acyl lipid A + a 2-acyl-sn-glycero-3-phosphocholine. The enzyme catalyses a lipid IVA + a 1,2-diacyl-sn-glycero-3-phosphocholine = a lipid IVB + a 2-acyl-sn-glycero-3-phosphocholine. It catalyses the reaction a lipid IIA + a 1,2-diacyl-sn-glycero-3-phosphocholine = a lipid IIB + a 2-acyl-sn-glycero-3-phosphocholine. Transfers a fatty acid residue from the sn-1 position of a phospholipid to the N-linked hydroxyfatty acid chain on the proximal unit of lipid A or its precursors. This chain is Lipid A acyltransferase PagP, found in Bordetella parapertussis (strain 12822 / ATCC BAA-587 / NCTC 13253).